A 1368-amino-acid chain; its full sequence is DNA-directed RNA polymerase subunit beta (1368 aa).

Belongs to the RNA polymerase beta chain family. As to quaternary structure, the RNAP catalytic core consists of 2 alpha, 1 beta, 1 beta' and 1 omega subunit. When a sigma factor is associated with the core the holoenzyme is formed, which can initiate transcription.

It catalyses the reaction RNA(n) + a ribonucleoside 5'-triphosphate = RNA(n+1) + diphosphate. DNA-dependent RNA polymerase catalyzes the transcription of DNA into RNA using the four ribonucleoside triphosphates as substrates. This chain is DNA-directed RNA polymerase subunit beta, found in Legionella pneumophila (strain Corby).